Consider the following 125-residue polypeptide: Calcitonin receptor-stimulating peptide 2 (125 aa).

The N-terminal stretch at 1–25 is a signal peptide; it reads MGFWKFLPFLVLSFLVVYQAGMFQA. Residues 26-77 constitute a propeptide that is removed on maturation; that stretch reads APFRSALENDFDPAILTEKEMCLLLAAVMNDYVQMKTSELKQEAEHFHITAQ. An intrachain disulfide couples Cys-81 to Cys-86.

It belongs to the calcitonin family.

The protein resides in the secreted. The polypeptide is Calcitonin receptor-stimulating peptide 2 (CRSP2) (Capra hircus (Goat)).